We begin with the raw amino-acid sequence, 242 residues long: Probable septum site-determining protein MinC (242 aa).

It belongs to the MinC family. As to quaternary structure, interacts with MinD and FtsZ.

Functionally, cell division inhibitor that blocks the formation of polar Z ring septums. Rapidly oscillates between the poles of the cell to destabilize FtsZ filaments that have formed before they mature into polar Z rings. Prevents FtsZ polymerization. This chain is Probable septum site-determining protein MinC, found in Thioalkalivibrio sulfidiphilus (strain HL-EbGR7).